Consider the following 193-residue polypeptide: uncharacterized protein (193 aa).

The tract at residues 55–94 is disordered; the sequence is PVGGAAGARSLSQALPAPAPPPPPPPGLGPSSERPWPSPW. Over residues 71–82 the composition is skewed to pro residues; it reads APAPPPPPPPGL.

This is an uncharacterized protein from Homo sapiens (Human).